A 199-amino-acid chain; its full sequence is Peroxiredoxin-2 (199 aa).

A Thioredoxin domain is found at 7–165 (AHVGKPAPEF…ALRLVQAFQY (159 aa)). Catalysis depends on cysteine 52, which acts as the Cysteine sulfenic acid (-SOH) intermediate. Serine 113 bears the Phosphoserine mark. At threonine 183 the chain carries Phosphothreonine. Lysine 197 bears the N6-acetyllysine mark.

Belongs to the peroxiredoxin family. AhpC/Prx1 subfamily. Homodimer; disulfide-linked, upon oxidation. 5 homodimers assemble to form a ring-like decamer. Interacts with TIPIN. The enzyme can be inactivated by further oxidation of the cysteine sulfenic acid (C(P)-SOH) to sulphinic acid (C(P)-SO2H) instead of its condensation to a disulfide bond. It can be reactivated by forming a transient disulfide bond with sulfiredoxin SRXN1, which reduces the cysteine sulfinic acid in an ATP- and Mg-dependent manner. In terms of processing, acetylation increases resistance to transition to high molecular-mass complexes. Deacetylated by HDAC6 which decreases reducing activity.

It localises to the cytoplasm. The enzyme catalyses a hydroperoxide + [thioredoxin]-dithiol = an alcohol + [thioredoxin]-disulfide + H2O. Functionally, thiol-specific peroxidase that catalyzes the reduction of hydrogen peroxide and organic hydroperoxides to water and alcohols, respectively. Plays a role in cell protection against oxidative stress by detoxifying peroxides and as sensor of hydrogen peroxide-mediated signaling events. Might participate in the signaling cascades of growth factors and tumor necrosis factor-alpha by regulating the intracellular concentrations of H(2)O(2). This chain is Peroxiredoxin-2 (PRDX2), found in Bos taurus (Bovine).